The sequence spans 334 residues: D-aspartate oxidase 1 (334 aa).

5 residues coordinate FAD: Asp-35, Arg-36, Ser-43, Gly-307, and Thr-312. A Microbody targeting signal motif is present at residues 332–334; the sequence is SKL.

Belongs to the DAMOX/DASOX family. Requires FAD as cofactor. As to expression, expressed in the intestinal cells, hypodermis and in unidentified cells in the head in adult hermaphrodites.

The protein localises to the peroxisome matrix. It carries out the reaction D-aspartate + O2 + H2O = oxaloacetate + H2O2 + NH4(+). It catalyses the reaction D-glutamate + O2 + H2O = H2O2 + 2-oxoglutarate + NH4(+). Its activity is regulated as follows. Not inhibited by potassium bromide or thiolactomycin. Selectively catalyzes the oxidative deamination of acidic amino acids. May play a role in the egg-laying events and early development of the worm, in addition to quality control of the germ cells. The polypeptide is D-aspartate oxidase 1 (ddo-1) (Caenorhabditis elegans).